The primary structure comprises 97 residues: Large ribosomal subunit protein eL21 (97 aa).

The disordered stretch occupies residues 1–23 (MTKMSKGPRSGSRRVMTKSVKNK).

This sequence belongs to the eukaryotic ribosomal protein eL21 family.

The protein is Large ribosomal subunit protein eL21 of Picrophilus torridus (strain ATCC 700027 / DSM 9790 / JCM 10055 / NBRC 100828 / KAW 2/3).